Reading from the N-terminus, the 299-residue chain is 4-sulfomuconolactone hydrolase (299 aa).

This sequence belongs to the metallo-dependent hydrolases superfamily. Sulfomuconolactone hydrolase family. In terms of assembly, monomer. Zn(2+) is required as a cofactor.

It carries out the reaction 4-sulfomuconolactone + H2O = maleylacetate + sulfite + 2 H(+). Involved in the degradation of 4-sulfocatechol which is a central intermediate in the degradation of substituted sulfonated benzenes. Catalyzes the hydrolytical desulfonation of 4-sulfomuconolactone to yield maleylacetate. This chain is 4-sulfomuconolactone hydrolase, found in Rhizobium radiobacter (Agrobacterium tumefaciens).